Here is a 1816-residue protein sequence, read N- to C-terminus: uncharacterized protein (1816 aa).

Disordered stretches follow at residues 338–357 (DSSS…NNNN) and 562–605 (ELEK…IKPK). The segment covering 339 to 357 (SSSSSSNNNNNNNNNNNNN) has biased composition (low complexity). The segment covering 562-577 (ELEKERIKKEKEDSKK) has biased composition (basic and acidic residues). A compositionally biased stretch (low complexity) spans 581 to 603 (KQSSSSSSSSTTTTSTTTSSTIK). Residues 826–999 (LDIVDKRESA…FLKKIDPNRK (174 aa)) form the Helicase ATP-binding domain. Position 839 to 846 (839 to 846 (ASTSSGKT)) interacts with ATP. The DEAH box signature appears at 949–952 (DEVH). One can recognise a Helicase C-terminal domain in the interval 1198–1379 (QLDLVIERFQ…SVVSPSLCLS (182 aa)). Residues 1388–1487 (TNGSANKSNE…TTTKTPTTTS (100 aa)) are disordered. Residues 1395–1427 (SNEENKVQVKENEKEREKEKEKEKEKEKEKETI) show a composition bias toward basic and acidic residues. Acidic residues predominate over residues 1445-1454 (NWDDDEEETA). Over residues 1456-1487 (STKTTPATTPTTTTTENTPATTTTTKTPTTTS) the composition is skewed to low complexity.

This sequence belongs to the helicase family. SKI2 subfamily.

The protein resides in the nucleus. This is an uncharacterized protein from Dictyostelium discoideum (Social amoeba).